We begin with the raw amino-acid sequence, 1319 residues long: Chitin-binding domain protein cbd-1 (1319 aa).

The first 19 residues, M1–S19, serve as a signal peptide directing secretion. 3 Chitin-binding type-2 domains span residues A28–V83, E96–C141, and D190–D236. Intrachain disulfides connect C61–C72, C128–C141, and C222–C235. Positions Y250–A271 are disordered. The region spanning P304 to P357 is the Chitin-binding type-2 4 domain. N-linked (GlcNAc...) asparagine glycosylation occurs at N327. C335 and C348 form a disulfide bridge. Residues K504 to E524 are disordered. Positions G513–E524 are enriched in basic and acidic residues. The Chitin-binding type-2 5 domain occupies N566 to C614. C601 and C614 are joined by a disulfide. A disordered region spans residues V649–S682. Chitin-binding type-2 domains follow at residues G689–S745, G782–T838, and V883–E942. Cysteines 721 and 734 form a disulfide. Residues E742–N764 are disordered. Over residues S745–N764 the composition is skewed to polar residues. Cystine bridges form between C814–C827 and C916–C929. The span at T984–G995 shows a compositional bias: polar residues. Residues T984–K1031 form a disordered region. N1016 carries N-linked (GlcNAc...) asparagine glycosylation. Residues D1017–E1027 are compositionally biased toward acidic residues. 4 Chitin-binding type-2 domains span residues D1029–K1081, E1105–V1163, S1179–N1237, and N1242–G1298. 4 disulfide bridges follow: C1060-C1073, C1139-C1152, C1213-C1226, and C1274-C1287. Residues S1297–Y1312 are compositionally biased toward low complexity. Residues S1297–Y1319 form a disordered region. N-linked (GlcNAc...) asparagine glycosylation occurs at N1304.

The protein localises to the secreted. Its subcellular location is the extracellular space. The protein resides in the extracellular matrix. In terms of biological role, in unfertilized oocytes, maintains egg-1 and egg-2 at the plasma membrane together with chitin synthase chs-1 and kinase mbk-2. Essential for the formation of a continuous and cohesive chitin layer following fertilization. The chain is Chitin-binding domain protein cbd-1 from Caenorhabditis elegans.